Consider the following 99-residue polypeptide: Nucleoid-associated protein MGAS2096_Spy1605 (99 aa).

This sequence belongs to the YbaB/EbfC family. In terms of assembly, homodimer.

The protein localises to the cytoplasm. It localises to the nucleoid. Functionally, binds to DNA and alters its conformation. May be involved in regulation of gene expression, nucleoid organization and DNA protection. The chain is Nucleoid-associated protein MGAS2096_Spy1605 from Streptococcus pyogenes serotype M12 (strain MGAS2096).